A 425-amino-acid chain; its full sequence is Zinc finger protein 789 (425 aa).

In terms of domain architecture, KRAB spans 11–82 (LSFEDVAMYF…DLPRTGNRKA (72 aa)). 8 C2H2-type zinc fingers span residues 201 to 223 (YECS…QRIH), 229 to 251 (FECK…KQCH), 257 to 279 (YRCH…KRIH), 285 to 307 (YKCS…QVIH), 313 to 335 (HKCL…QQIH), 341 to 363 (HKCS…QRIH), 369 to 391 (FQCG…QVIH), and 397 to 419 (YQCV…QGTH).

This sequence belongs to the krueppel C2H2-type zinc-finger protein family.

It localises to the nucleus. Functionally, may be involved in transcriptional regulation. The sequence is that of Zinc finger protein 789 (ZNF789) from Homo sapiens (Human).